Here is a 94-residue protein sequence, read N- to C-terminus: Histone-like DNA-binding protein (94 aa).

The protein belongs to the bacterial histone-like protein family.

The polypeptide is Histone-like DNA-binding protein (Rickettsia bellii (strain RML369-C)).